The primary structure comprises 1093 residues: Regulator of nonsense transcripts 1 homolog (1093 aa).

Positions 42-79 are disordered; sequence YGVYGGRGPRGNGRRRHDDDDNETEVLDDDDDESLASV. Over residues 61–75 the composition is skewed to acidic residues; the sequence is DDNETEVLDDDDDES. The 158-residue stretch at 95 to 252 folds into the Upf1 CH-rich domain; it reads EKELPPHACA…AKLEEMWKEA (158 aa). Zn(2+) is bound by residues Cys-103, Cys-106, Cys-117, Cys-120, Cys-125, His-135, His-139, His-145, Cys-163, Cys-166, Cys-189, and Cys-193. The interval 103–135 is C3H; the sequence is CAYCGIHSPSSVVKCLTCNKWFCSAKGSAFSSH. Residues 117-145 are CC/SHH/C; it reads CLTCNKWFCSAKGSAFSSHIVNHLVRARH. The tract at residues 163 to 193 is C4; it reads CYNCGTKNVFILGFIPAKSDTVVVLLCRQPC. Residues Gln-460, 480–484, Gln-650, Tyr-687, and Glu-818 each bind ATP; that span reads GTGKT.

The protein belongs to the DNA2/NAM7 helicase family.

It is found in the cytoplasm. It carries out the reaction ATP + H2O = ADP + phosphate + H(+). Its function is as follows. RNA-dependent helicase required for nonsense-mediated decay (NMD) of aberrant mRNAs containing premature stop codons and modulates the expression level of normal mRNAs. Also capable of unwinding double-stranded DNA and translocating on single-stranded DNA. The chain is Regulator of nonsense transcripts 1 homolog from Neurospora crassa (strain ATCC 24698 / 74-OR23-1A / CBS 708.71 / DSM 1257 / FGSC 987).